Reading from the N-terminus, the 138-residue chain is Large-conductance mechanosensitive channel (138 aa).

The next 3 membrane-spanning stretches (helical) occupy residues 19–39 (VGVI…GDII), 40–60 (MPII…IPLA), and 81–101 (GSFL…FMVI).

This sequence belongs to the MscL family. As to quaternary structure, homopentamer.

Its subcellular location is the cell inner membrane. Its function is as follows. Channel that opens in response to stretch forces in the membrane lipid bilayer. May participate in the regulation of osmotic pressure changes within the cell. The chain is Large-conductance mechanosensitive channel from Bradyrhizobium sp. (strain ORS 278).